Consider the following 312-residue polypeptide: uncharacterized protein (312 aa).

This is an uncharacterized protein from Escherichia coli O157:H7.